The primary structure comprises 465 residues: Ras GTPase-activating protein-binding protein 1 (465 aa).

In terms of domain architecture, NTF2 spans 11–133; sequence VGREFVRQYY…FYVHNDIFRY (123 aa). Glycyl lysine isopeptide (Lys-Gly) (interchain with G-Cter in ubiquitin) cross-links involve residues Lys-36, Lys-50, Lys-59, Lys-64, Lys-76, and Lys-123. An acidic disordered region region spans residues 142-224; it reads VTEPQEESEE…EAALEEAAPD (83 aa). Thr-143 is modified (phosphothreonine). Residues 144–330 form a disordered region; it reads EPQEESEEEV…GEPGDVEPRR (187 aa). Acidic residues-rich tracts occupy residues 145–157 and 184–205; these read PQEE…EEPE and EHLE…EPEP. Ser-149 is subject to Phosphoserine. Residues Ser-231, Ser-248, and Ser-251 each carry the phosphoserine modification. The span at 248–257 shows a compositional bias: polar residues; the sequence is SWASVTSKNL. Basic and acidic residues-rich tracts occupy residues 295-305 and 316-330; these read PQRDQRVREQR and PIRE…EPRR. Residues 338 to 413 enclose the RRM domain; sequence HQLFIGNLPH…VRLNVEEKKT (76 aa). Glycyl lysine isopeptide (Lys-Gly) (interchain with G-Cter in ubiquitin) cross-links involve residues Lys-351 and Lys-355. Ser-371 is subject to Phosphoserine. Lys-374 is covalently cross-linked (Glycyl lysine isopeptide (Lys-Gly) (interchain with G-Cter in ubiquitin)). Lys-374 carries the post-translational modification N6-acetyllysine; alternate. A Glycyl lysine isopeptide (Lys-Gly) (interchain with G-Cter in SUMO2); alternate cross-link involves residue Lys-374. Lys-391 is covalently cross-linked (Glycyl lysine isopeptide (Lys-Gly) (interchain with G-Cter in ubiquitin); alternate). The segment at 408–464 is RG-rich region; sequence VEEKKTRAAREGDRRDNRLRGPGGPRGGPSGGMRGPPRGGMVQKPGFGVGRGITTPR. A compositionally biased stretch (basic and acidic residues) spans 411 to 426; sequence KKTRAAREGDRRDNRL. Positions 411-465 are disordered; the sequence is KKTRAAREGDRRDNRLRGPGGPRGGPSGGMRGPPRGGMVQKPGFGVGRGITTPRQ. Arg-427 carries the asymmetric dimethylarginine modification. A compositionally biased stretch (gly residues) spans 428-445; it reads GPGGPRGGPSGGMRGPPR. Position 433 is an asymmetric dimethylarginine; alternate (Arg-433). Arg-433, Arg-445, Arg-458, and Arg-464 each carry omega-N-methylarginine; alternate. Arg-458 carries the dimethylated arginine; alternate modification.

As to quaternary structure, homodimer and oligomer. Component of a TAU mRNP complex, at least composed of IGF2BP1, ELAVL4 and G3BP1. Binds to the SH3 domain of Ras GTPase-activating protein (RASA1) in proliferating cells. No interaction in quiescent cells. Interacts (via NTF2 domain) with USP10; inhibiting stress granule formation by lowering G3BP1 valence. Interacts (via NTF2 domain) with CAPRIN1; promoting stress granule formation by lowering the saturation-concentration of G3BP1. Interacts (via NTF2 domain) with UBAP2L; promoting stress granule formation. Associates (via RG-rich region) with 40S ribosome subunits. Interacts with RPTOR and SPAG5; this complex is increased by oxidative stress. Interacts with ATXN2L. Interacts with STYXL1. Interacts with CGAS (via N-terminus); this interaction promotes the DNA-binding and activation of CGAS. Interacts (via C-terminus) with RIGI. Interacts with PABPC1. Interacts with QKI (isoforms QKI6 and QKI7); directing N(7)-methylguanine-containing mRNAs to stress granules. The cofactor is Mg(2+). Phosphorylation of the acidic disordered region regulates stress granule assembly. RASA1-dependent phosphorylation of Ser-149 induces a conformational change that prevents self-association. Dephosphorylation after HRAS activation is required for stress granule assembly. Ser-149 phosphorylation induces partial nuclear localization. Post-translationally, arg-435 is dimethylated, probably to asymmetric dimethylarginine. In terms of processing, ubiquitinated by TRIM21 via 'Lys-63'-linked polyubiquitination in the NTF2 domain in response to heat shock, leading to stress granule disassembly: ubiquitination promotes interaction with the FAF2 adapter, followed by interaction with VCP, which extracts G3BP1 from stress granules, leading to stress granule disassembly. In case of prolonged stress, ubiquitination by TRIM21 leads to autophagy-dependent degradation of G3BP1 via recruitment of ubiquitinated G3BP1 by SQSTM1 and/or CALCOCO2 to autophagosomes. As to expression, ubiquitous.

The protein resides in the cytoplasm. It localises to the cytosol. The protein localises to the perikaryon. It is found in the stress granule. Its subcellular location is the nucleus. It catalyses the reaction ATP + H2O = ADP + phosphate + H(+). Under physiological conditions, G3BP1 adopts a compact state that is stabilized by intramolecular interactions between the RG-rich and the acidic regions that inhibit phase separation. Upon stress, polysomes disassemble and mRNAs are released in an unfolded protein-free state. Binding of unfolded mRNA to G3BP1 outcompetes the intramolecular interactions and RNA-bound G3BP1 adopts an expanded conformation in which the RG-rich region becomes exposed to engage in protein-protein and protein-RNA interactions, allowing physical cross-linking of RNA molecules to form protein-RNA condensates, leading to liquid-liquid phase separation (LLPS). Its function is as follows. Protein involved in various processes, such as stress granule formation and innate immunity. Plays an essential role in stress granule formation. Stress granules are membraneless compartments that store mRNAs and proteins, such as stalled translation pre-initiation complexes, in response to stress. Promotes formation of stress granules phase-separated membraneless compartment by undergoing liquid-liquid phase separation (LLPS) upon unfolded RNA-binding: functions as a molecular switch that triggers RNA-dependent LLPS in response to a rise in intracellular free RNA concentrations. Also acts as an ATP- and magnesium-dependent helicase: unwinds DNA/DNA, RNA/DNA, and RNA/RNA substrates with comparable efficiency. Acts unidirectionally by moving in the 5' to 3' direction along the bound single-stranded DNA. Unwinds preferentially partial DNA and RNA duplexes having a 17 bp annealed portion and either a hanging 3' tail or hanging tails at both 5'- and 3'-ends. Plays an essential role in innate immunity by promoting CGAS and RIGI activity. Participates in the DNA-triggered cGAS/STING pathway by promoting the DNA binding and activation of CGAS. Triggers the condensation of cGAS, a process probably linked to the formation of membrane-less organelles. Also enhances RIGI-induced type I interferon production probably by helping RIGI at sensing pathogenic RNA. May also act as a phosphorylation-dependent sequence-specific endoribonuclease in vitro: Cleaves exclusively between cytosine and adenine and cleaves MYC mRNA preferentially at the 3'-UTR. This chain is Ras GTPase-activating protein-binding protein 1 (G3bp1), found in Mus musculus (Mouse).